A 70-amino-acid polypeptide reads, in one-letter code: DNA gyrase inhibitor YacG (70 aa).

Residues C7, C10, C26, and C30 each contribute to the Zn(2+) site.

This sequence belongs to the DNA gyrase inhibitor YacG family. As to quaternary structure, interacts with GyrB. The cofactor is Zn(2+).

In terms of biological role, inhibits all the catalytic activities of DNA gyrase by preventing its interaction with DNA. Acts by binding directly to the C-terminal domain of GyrB, which probably disrupts DNA binding by the gyrase. This chain is DNA gyrase inhibitor YacG, found in Shewanella woodyi (strain ATCC 51908 / MS32).